Here is a 1241-residue protein sequence, read N- to C-terminus: uncharacterized protein (1241 aa).

Residues 21-49 are a coiled coil; the sequence is ILNDNVREINIAKKEIKQLREYVGILQQN. 3 consecutive transmembrane segments (helical) span residues 261–281, 918–938, and 947–967; these read VNAI…FVLG, AVVG…GLVA, and GHIV…VIGG. Residues 1005 to 1028 form a disordered region; the sequence is THIGKEDSNNGVSTSTNKRSIGKA. A compositionally biased stretch (polar residues) spans 1013–1028; it reads NNGVSTSTNKRSIGKA.

Its subcellular location is the host membrane. This is an uncharacterized protein from Diadromus pulchellus (Parasitic wasp).